Consider the following 385-residue polypeptide: Glutamate 5-kinase (385 aa).

Residue Lys-17 participates in ATP binding. The substrate site is built by Ser-64, Asp-151, and Asn-165. 185 to 186 (SD) provides a ligand contact to ATP. A PUA domain is found at 291-367 (SGTVRVDAGA…NQIDNILGYN (77 aa)).

Belongs to the glutamate 5-kinase family.

It localises to the cytoplasm. It catalyses the reaction L-glutamate + ATP = L-glutamyl 5-phosphate + ADP. The protein operates within amino-acid biosynthesis; L-proline biosynthesis; L-glutamate 5-semialdehyde from L-glutamate: step 1/2. Functionally, catalyzes the transfer of a phosphate group to glutamate to form L-glutamate 5-phosphate. The protein is Glutamate 5-kinase of Methanosarcina acetivorans (strain ATCC 35395 / DSM 2834 / JCM 12185 / C2A).